A 682-amino-acid polypeptide reads, in one-letter code: DNA-directed RNA polymerase subunit beta' (682 aa).

Cys69, Cys71, Cys87, and Cys90 together coordinate Zn(2+). Mg(2+) is bound by residues Asp489, Asp491, and Asp493.

The protein belongs to the RNA polymerase beta' chain family. RpoC1 subfamily. In plastids the minimal PEP RNA polymerase catalytic core is composed of four subunits: alpha, beta, beta', and beta''. When a (nuclear-encoded) sigma factor is associated with the core the holoenzyme is formed, which can initiate transcription. Requires Mg(2+) as cofactor. The cofactor is Zn(2+).

It localises to the plastid. The protein localises to the chloroplast. The enzyme catalyses RNA(n) + a ribonucleoside 5'-triphosphate = RNA(n+1) + diphosphate. Its function is as follows. DNA-dependent RNA polymerase catalyzes the transcription of DNA into RNA using the four ribonucleoside triphosphates as substrates. The polypeptide is DNA-directed RNA polymerase subunit beta' (Acorus calamus var. americanus (American sweet flag)).